A 302-amino-acid chain; its full sequence is Large ribosomal subunit protein uL18 (302 aa).

The protein belongs to the universal ribosomal protein uL18 family. In terms of assembly, component of the large ribosomal subunit (LSU).

Its subcellular location is the cytoplasm. The protein localises to the nucleus. Its function is as follows. Component of the ribosome, a large ribonucleoprotein complex responsible for the synthesis of proteins in the cell. The small ribosomal subunit (SSU) binds messenger RNAs (mRNAs) and translates the encoded message by selecting cognate aminoacyl-transfer RNA (tRNA) molecules. The large subunit (LSU) contains the ribosomal catalytic site termed the peptidyl transferase center (PTC), which catalyzes the formation of peptide bonds, thereby polymerizing the amino acids delivered by tRNAs into a polypeptide chain. The nascent polypeptides leave the ribosome through a tunnel in the LSU and interact with protein factors that function in enzymatic processing, targeting, and the membrane insertion of nascent chains at the exit of the ribosomal tunnel. This chain is Large ribosomal subunit protein uL18 (RPL5), found in Cucumis sativus (Cucumber).